Here is a 396-residue protein sequence, read N- to C-terminus: Pre-mycofactocin synthase (396 aa).

The FMN hydroxy acid dehydrogenase domain occupies 1-383 (MAEAWFETVA…SPADILVPTG (383 aa)). Residues S108, Q128, T156, and K254 each coordinate FMN. H278 serves as the catalytic Proton acceptor. FMN-binding positions include 309-313 (DGGIR) and 332-333 (GR).

Belongs to the FMN-dependent alpha-hydroxy acid dehydrogenase family. Requires FMN as cofactor.

It carries out the reaction 3-amino-5-[(4-hydroxyphenyl)methyl]-4,4-dimethyl-2-pyrrolidin-2-one + O2 + H2O = pre-mycofactocin + H2O2 + NH4(+). Functionally, involved in the biosynthesis of the enzyme cofactor mycofactocin (MFT). Catalyzes the oxidative deamination of AHDP (3-amino-5-[(4-hydroxyphenyl)methyl]-4,4-dimethyl-2-pyrrolidin-2-one), forming an alpha-keto amide moiety on the resulting molecule, which is called pre-mycofactocin (PMFT). This reaction occurs via a 5-[(4-hydroxyphenyl)methyl]-3-imino-4,4-dimethylpyrrolidin-2-one intermediate, which converts to PMFT. The alpha-keto amide moiety is the redox-active center for the redox activity of mycofactocin. This chain is Pre-mycofactocin synthase (mftD), found in Mycobacterium tuberculosis (strain CDC 1551 / Oshkosh).